Reading from the N-terminus, the 514-residue chain is NAD(P)H-quinone oxidoreductase subunit 2 (514 aa).

Helical transmembrane passes span isoleucine 16–valine 36, tryptophan 43–tryptophan 63, leucine 80–valine 100, leucine 110–alanine 130, leucine 133–tyrosine 153, leucine 168–leucine 188, leucine 211–valine 231, proline 245–isoleucine 265, tryptophan 279–leucine 299, methionine 307–serine 327, isoleucine 335–phenylalanine 355, leucine 379–glycine 399, glycine 411–isoleucine 431, and valine 467–phenylalanine 487.

This sequence belongs to the complex I subunit 2 family. As to quaternary structure, NDH-1 can be composed of about 15 different subunits; different subcomplexes with different compositions have been identified which probably have different functions.

The protein localises to the cellular thylakoid membrane. It carries out the reaction a plastoquinone + NADH + (n+1) H(+)(in) = a plastoquinol + NAD(+) + n H(+)(out). The catalysed reaction is a plastoquinone + NADPH + (n+1) H(+)(in) = a plastoquinol + NADP(+) + n H(+)(out). Its function is as follows. NDH-1 shuttles electrons from an unknown electron donor, via FMN and iron-sulfur (Fe-S) centers, to quinones in the respiratory and/or the photosynthetic chain. The immediate electron acceptor for the enzyme in this species is believed to be plastoquinone. Couples the redox reaction to proton translocation, and thus conserves the redox energy in a proton gradient. Cyanobacterial NDH-1 also plays a role in inorganic carbon-concentration. This is NAD(P)H-quinone oxidoreductase subunit 2 from Gloeothece citriformis (strain PCC 7424) (Cyanothece sp. (strain PCC 7424)).